Reading from the N-terminus, the 943-residue chain is Isoleucine--tRNA ligase (943 aa).

A 'HIGH' region motif is present at residues proline 58–histidine 68. Glutamate 567 serves as a coordination point for L-isoleucyl-5'-AMP. Residues lysine 608–serine 612 carry the 'KMSKS' region motif. Lysine 611 lines the ATP pocket. Cysteine 906, cysteine 909, cysteine 926, and cysteine 929 together coordinate Zn(2+).

The protein belongs to the class-I aminoacyl-tRNA synthetase family. IleS type 1 subfamily. As to quaternary structure, monomer. The cofactor is Zn(2+).

It localises to the cytoplasm. It catalyses the reaction tRNA(Ile) + L-isoleucine + ATP = L-isoleucyl-tRNA(Ile) + AMP + diphosphate. Functionally, catalyzes the attachment of isoleucine to tRNA(Ile). As IleRS can inadvertently accommodate and process structurally similar amino acids such as valine, to avoid such errors it has two additional distinct tRNA(Ile)-dependent editing activities. One activity is designated as 'pretransfer' editing and involves the hydrolysis of activated Val-AMP. The other activity is designated 'posttransfer' editing and involves deacylation of mischarged Val-tRNA(Ile). This chain is Isoleucine--tRNA ligase, found in Pseudomonas aeruginosa (strain ATCC 15692 / DSM 22644 / CIP 104116 / JCM 14847 / LMG 12228 / 1C / PRS 101 / PAO1).